The following is a 177-amino-acid chain: Putative adenylate kinase (177 aa).

ATP is bound by residues Gly10, Gly12, Lys13, Thr14, and Thr15. The NMP stretch occupies residues 30–53 (DITEAVKKYKLYTEKDEDMDSYVI). Residues 103-113 (KRGYKPKKVLE) form an LID region. Arg104 provides a ligand contact to ATP.

It belongs to the adenylate kinase family. AK6 subfamily. In terms of assembly, interacts with uS11. Not a structural component of 40S pre-ribosomes, but transiently interacts with them by binding to uS11.

It carries out the reaction AMP + ATP = 2 ADP. The enzyme catalyses ATP + H2O = ADP + phosphate + H(+). Its function is as follows. Broad-specificity nucleoside monophosphate (NMP) kinase that catalyzes the reversible transfer of the terminal phosphate group between nucleoside triphosphates and monophosphates. Also has ATPase activity. Involved in the late maturation steps of the 30S ribosomal particles, specifically 16S rRNA maturation. While NMP activity is not required for ribosome maturation, ATPase activity is. Associates transiently with small ribosomal subunit protein uS11. ATP hydrolysis breaks the interaction with uS11. May temporarily remove uS11 from the ribosome to enable a conformational change of the ribosomal RNA that is needed for the final maturation step of the small ribosomal subunit. This chain is Putative adenylate kinase, found in Methanocaldococcus jannaschii (strain ATCC 43067 / DSM 2661 / JAL-1 / JCM 10045 / NBRC 100440) (Methanococcus jannaschii).